We begin with the raw amino-acid sequence, 429 residues long: Enolase (429 aa).

Q164 serves as a coordination point for (2R)-2-phosphoglycerate. The active-site Proton donor is E206. Mg(2+) is bound by residues D243, E286, and D313. (2R)-2-phosphoglycerate is bound by residues K338, R367, S368, and K389. K338 serves as the catalytic Proton acceptor.

Belongs to the enolase family. Mg(2+) is required as a cofactor.

The protein resides in the cytoplasm. Its subcellular location is the secreted. It localises to the cell surface. It carries out the reaction (2R)-2-phosphoglycerate = phosphoenolpyruvate + H2O. It participates in carbohydrate degradation; glycolysis; pyruvate from D-glyceraldehyde 3-phosphate: step 4/5. Its function is as follows. Catalyzes the reversible conversion of 2-phosphoglycerate (2-PG) into phosphoenolpyruvate (PEP). It is essential for the degradation of carbohydrates via glycolysis. The sequence is that of Enolase from Thermotoga sp. (strain RQ2).